The following is a 65-amino-acid chain: Large ribosomal subunit protein uL29 (65 aa).

Belongs to the universal ribosomal protein uL29 family.

This chain is Large ribosomal subunit protein uL29, found in Xylella fastidiosa (strain Temecula1 / ATCC 700964).